The following is a 492-amino-acid chain: Protein nucleotidyltransferase YdiU (492 aa).

The ATP site is built by Gly101, Gly103, Arg104, Lys124, Asp136, Gly137, Arg187, and Arg194. The Proton acceptor role is filled by Asp268. Asn269 and Asp278 together coordinate Mg(2+). Asp278 provides a ligand contact to ATP.

The protein belongs to the SELO family. Mg(2+) is required as a cofactor. Requires Mn(2+) as cofactor.

The enzyme catalyses L-seryl-[protein] + ATP = 3-O-(5'-adenylyl)-L-seryl-[protein] + diphosphate. It carries out the reaction L-threonyl-[protein] + ATP = 3-O-(5'-adenylyl)-L-threonyl-[protein] + diphosphate. The catalysed reaction is L-tyrosyl-[protein] + ATP = O-(5'-adenylyl)-L-tyrosyl-[protein] + diphosphate. It catalyses the reaction L-histidyl-[protein] + UTP = N(tele)-(5'-uridylyl)-L-histidyl-[protein] + diphosphate. The enzyme catalyses L-seryl-[protein] + UTP = O-(5'-uridylyl)-L-seryl-[protein] + diphosphate. It carries out the reaction L-tyrosyl-[protein] + UTP = O-(5'-uridylyl)-L-tyrosyl-[protein] + diphosphate. In terms of biological role, nucleotidyltransferase involved in the post-translational modification of proteins. It can catalyze the addition of adenosine monophosphate (AMP) or uridine monophosphate (UMP) to a protein, resulting in modifications known as AMPylation and UMPylation. This chain is Protein nucleotidyltransferase YdiU, found in Corynebacterium efficiens (strain DSM 44549 / YS-314 / AJ 12310 / JCM 11189 / NBRC 100395).